Consider the following 414-residue polypeptide: xyloglucan O-acetyltransferase 2 (414 aa).

Over 1 to 26 (MKSSSSIFRETSEKKSERWMMMNIGR) the chain is Cytoplasmic. The helical; Signal-anchor for type II membrane protein transmembrane segment at 27–47 (FSPFFLSSFCITLFFTGFFVY) threads the bilayer. Residues 48 to 414 (QNPFKSIADQ…FLMAIIRQLR (367 aa)) are Lumenal-facing. 4 cysteine pairs are disulfide-bonded: C70–C120, C91–C156, C100–C394, and C317–C390. A glycan (N-linked (GlcNAc...) asparagine) is linked at N88. The GDS motif motif lies at 143 to 145 (GDS). S145 functions as the Nucleophile in the catalytic mechanism. Residues N205, N263, and N308 are each glycosylated (N-linked (GlcNAc...) asparagine). D389 functions as the Proton donor in the catalytic mechanism. The short motif at 389-392 (DCVH) is the DXXH motif element. Catalysis depends on H392, which acts as the Proton acceptor.

The protein belongs to the PC-esterase family. TBL subfamily.

It localises to the membrane. Its function is as follows. Xyloglucan acetyltransferase that catalyzes the acetylation of fucosylated Gal residues on xyloglucan side chains. Predominantly catalyze 6-O-monoacetylation of Gal residues in the Fuc-Gal-Xyl trisaccharide side chains of xyloglucan oligomers. Involved in xyloglucan specific O-acetylation in seeds. The polypeptide is xyloglucan O-acetyltransferase 2 (Arabidopsis thaliana (Mouse-ear cress)).